A 543-amino-acid chain; its full sequence is Exodeoxyribonuclease 7 large subunit (543 aa).

The disordered stretch occupies residues 498 to 543; that stretch reads VTGEGDKASPPPQAASATTTPAPGRPNPLPKSPKKSEPPAGQGSLF.

It belongs to the XseA family. In terms of assembly, heterooligomer composed of large and small subunits.

It localises to the cytoplasm. It catalyses the reaction Exonucleolytic cleavage in either 5'- to 3'- or 3'- to 5'-direction to yield nucleoside 5'-phosphates.. In terms of biological role, bidirectionally degrades single-stranded DNA into large acid-insoluble oligonucleotides, which are then degraded further into small acid-soluble oligonucleotides. The polypeptide is Exodeoxyribonuclease 7 large subunit (Allorhizobium ampelinum (strain ATCC BAA-846 / DSM 112012 / S4) (Agrobacterium vitis (strain S4))).